A 363-amino-acid polypeptide reads, in one-letter code: Protein TAX-1 (363 aa).

Residues 129-363 (RYGNAEEILS…IPFRGVAAEQ (235 aa)) are required for localization to the flagellum and for flagellar motility. TPR repeat units follow at residues 157–190 (AELH…LSVM) and 199–232 (TFAY…WLKH).

As to quaternary structure, interacts with TTC29.

It localises to the cytoplasm. The protein resides in the cytoskeleton. The protein localises to the flagellum axoneme. Its function is as follows. Required for flagellum motility. The protein is Protein TAX-1 of Trypanosoma brucei brucei (strain 927/4 GUTat10.1).